The sequence spans 56 residues: Stable protein 1 (56 aa).

The Stress-response A/B barrel domain maps to 1–44 (GYTHAFESTFESKSGLQEYLDSAALAAFAEGFLPTLSQRSFNWG).

In Populus euphratica (Euphrates poplar), this protein is Stable protein 1.